The sequence spans 71 residues: MKARELQELRQGSSPQDLQEKVQDLKSELFNLRFQLATGQLENPMRIREVKKSIAQIKTILREKELRAFEQ.

Residues 1–20 (MKARELQELRQGSSPQDLQE) are disordered.

It belongs to the universal ribosomal protein uL29 family.

In Clostridium kluyveri (strain ATCC 8527 / DSM 555 / NBRC 12016 / NCIMB 10680 / K1), this protein is Large ribosomal subunit protein uL29.